A 281-amino-acid chain; its full sequence is Streptomycin biosynthesis protein StrF (281 aa).

The protein operates within antibiotic biosynthesis; streptomycin biosynthesis. Functionally, may be involved in the formation of N-methyl-L-glucosamine. The sequence is that of Streptomycin biosynthesis protein StrF (strF) from Streptomyces griseus.